Reading from the N-terminus, the 416-residue chain is Phosphoglycerate kinase (416 aa).

Residues 24–26, R40, 63–66, R126, and R166 each bind substrate; these read DLN and HLGR. Residues K216, G304, E335, and 364–367 contribute to the ATP site; that span reads GGDS.

Belongs to the phosphoglycerate kinase family. As to quaternary structure, monomer.

Its subcellular location is the cytoplasm. It carries out the reaction (2R)-3-phosphoglycerate + ATP = (2R)-3-phospho-glyceroyl phosphate + ADP. It functions in the pathway carbohydrate degradation; glycolysis; pyruvate from D-glyceraldehyde 3-phosphate: step 2/5. The chain is Phosphoglycerate kinase from Mycobacterium leprae (strain Br4923).